A 74-amino-acid chain; its full sequence is Putative defensin-like protein 12 (74 aa).

An N-terminal signal peptide occupies residues 1–26 (MAKPCAAFLVFLCLSMLILSIPDISC). Intrachain disulfides connect C26/C50, C33/C59, and C39/C61.

Belongs to the DEFL family.

The protein localises to the secreted. The chain is Putative defensin-like protein 12 from Arabidopsis thaliana (Mouse-ear cress).